The chain runs to 165 residues: NAD(P)H-quinone oxidoreductase subunit J, chloroplastic (165 aa).

Belongs to the complex I 30 kDa subunit family. NDH is composed of at least 16 different subunits, 5 of which are encoded in the nucleus.

The protein localises to the plastid. The protein resides in the chloroplast thylakoid membrane. It carries out the reaction a plastoquinone + NADH + (n+1) H(+)(in) = a plastoquinol + NAD(+) + n H(+)(out). The enzyme catalyses a plastoquinone + NADPH + (n+1) H(+)(in) = a plastoquinol + NADP(+) + n H(+)(out). Its function is as follows. NDH shuttles electrons from NAD(P)H:plastoquinone, via FMN and iron-sulfur (Fe-S) centers, to quinones in the photosynthetic chain and possibly in a chloroplast respiratory chain. The immediate electron acceptor for the enzyme in this species is believed to be plastoquinone. Couples the redox reaction to proton translocation, and thus conserves the redox energy in a proton gradient. The protein is NAD(P)H-quinone oxidoreductase subunit J, chloroplastic of Ipomoea purpurea (Common morning glory).